Reading from the N-terminus, the 637-residue chain is Biosynthetic arginine decarboxylase (637 aa).

An N6-(pyridoxal phosphate)lysine modification is found at lysine 101. A substrate-binding site is contributed by 286-296 (FDVGGGLAVDY).

It belongs to the Orn/Lys/Arg decarboxylase class-II family. SpeA subfamily. It depends on Mg(2+) as a cofactor. Pyridoxal 5'-phosphate serves as cofactor.

It carries out the reaction L-arginine + H(+) = agmatine + CO2. It participates in amine and polyamine biosynthesis; agmatine biosynthesis; agmatine from L-arginine: step 1/1. Catalyzes the biosynthesis of agmatine from arginine. This is Biosynthetic arginine decarboxylase from Shewanella sediminis (strain HAW-EB3).